A 396-amino-acid polypeptide reads, in one-letter code: Phosphoglycerate kinase (396 aa).

Substrate-binding positions include Asp-21 to Asn-23, Arg-36, His-59 to Lys-62, Arg-119, and Arg-156. ATP-binding positions include Lys-206, Glu-325, and Gly-352–Ser-355.

The protein belongs to the phosphoglycerate kinase family. As to quaternary structure, monomer.

It is found in the cytoplasm. It carries out the reaction (2R)-3-phosphoglycerate + ATP = (2R)-3-phospho-glyceroyl phosphate + ADP. Its pathway is carbohydrate degradation; glycolysis; pyruvate from D-glyceraldehyde 3-phosphate: step 2/5. The sequence is that of Phosphoglycerate kinase from Macrococcus caseolyticus (strain JCSC5402) (Macrococcoides caseolyticum).